The sequence spans 613 residues: AP-5 complex subunit mu (613 aa).

The MHD domain occupies 309–563 (KQRLLFTIHE…DYAKVSFKIV (255 aa)). The segment at 501–522 (SPLQSRRKGDGDDEESEDESAE) is disordered. Residues 511–521 (GDDEESEDESA) are compositionally biased toward acidic residues.

It belongs to the adaptor complexes medium subunit family. In terms of assembly, probably part of the adaptor protein complex 5 (AP-5).

It is found in the cytoplasmic vesicle membrane. This chain is AP-5 complex subunit mu (AP5M), found in Arabidopsis thaliana (Mouse-ear cress).